The following is a 493-amino-acid chain: Glutamyl-tRNA(Gln) amidotransferase subunit A (493 aa).

Catalysis depends on charge relay system residues Lys-81 and Ser-156. Residue Ser-180 is the Acyl-ester intermediate of the active site.

It belongs to the amidase family. GatA subfamily. As to quaternary structure, heterotrimer of A, B and C subunits.

The catalysed reaction is L-glutamyl-tRNA(Gln) + L-glutamine + ATP + H2O = L-glutaminyl-tRNA(Gln) + L-glutamate + ADP + phosphate + H(+). Functionally, allows the formation of correctly charged Gln-tRNA(Gln) through the transamidation of misacylated Glu-tRNA(Gln) in organisms which lack glutaminyl-tRNA synthetase. The reaction takes place in the presence of glutamine and ATP through an activated gamma-phospho-Glu-tRNA(Gln). In Mycolicibacterium paratuberculosis (strain ATCC BAA-968 / K-10) (Mycobacterium paratuberculosis), this protein is Glutamyl-tRNA(Gln) amidotransferase subunit A.